Consider the following 859-residue polypeptide: Paladin (859 aa).

A disordered region spans residues 1-34 (MGTTASTAQQTVSAGTSLEGLQGGSSSSMDSQHS). A lipid anchor (N-myristoyl glycine) is attached at Gly-2. Ser-89 bears the Phosphoserine mark.

Belongs to the paladin family. As to expression, vascular expression detected in the central nervous system, kidney, lung, heart, skeletal muscle, white adipose tissue (WAT), brown adipose tissue, liver, pancreas and spleen. Not expressed in all vessels: for instance, not expressed in capillaries in the brain, and expressed mainly in large vessels in the heart, WAT, liver, pancreas and kidney. Predominant nonvascular expression in myocardium and lung mesenchyme. In large vessels, primarily expressed by smooth muscle cells, but occasionally detected at low levels in the endothelium. Expressed in various cells of the hematopoietic lineage.

Its subcellular location is the cytoplasm. The protein localises to the cytosol. This Mus musculus (Mouse) protein is Paladin (Pald1).